The chain runs to 549 residues: Cation/acetate symporter ActP (549 aa).

The next 13 membrane-spanning stretches (helical) occupy residues 33 to 53 (WQAI…TYWA), 76 to 96 (GLAI…SALV), 103 to 123 (GLIY…LIAE), 149 to 169 (LSAC…MVGA), 183 to 203 (IAVV…GMLA), 206 to 226 (WVQI…AFMV), 262 to 282 (ISAL…PHIL), 303 to 323 (GFMG…IMLV), 355 to 375 (LFLG…VAGL), 404 to 424 (VSKI…ILFE), 428 to 448 (IAFM…PIIL), 463 to 483 (IGGW…PTIW), and 493 to 513 (IFPY…GIWF).

Belongs to the sodium:solute symporter (SSF) (TC 2.A.21) family.

It localises to the cell inner membrane. Its function is as follows. Transports acetate. The polypeptide is Cation/acetate symporter ActP (Enterobacter sp. (strain 638)).